Reading from the N-terminus, the 200-residue chain is Cation channel sperm-associated auxiliary subunit zeta (200 aa).

Basic and acidic residues predominate over residues 1 to 29; the sequence is MEEKPSKVSLKSSDRQGSDEESVHSDTRD. Disordered regions lie at residues 1-31 and 58-78; these read MEEK…RDLW and NISK…EGYK.

Component of the CatSper complex or CatSpermasome composed of the core pore-forming members CATSPER1, CATSPER2, CATSPER3 and CATSPER4 as well as auxiliary members CATSPERB, CATSPERG, CATSPERD, CATSPERE, CATSPERZ, C2CD6/CATSPERT, TMEM249, TMEM262 and EFCAB9. HSPA1 may be an additional auxiliary complex member. The core complex members CATSPER1, CATSPER2, CATSPER3 and CATSPER4 form a heterotetrameric channel. The auxiliary CATSPERB, CATSPERG, CATSPERD and CATSPERE subunits form a pavilion-like structure over the pore which stabilizes the complex through interactions with CATSPER4, CATSPER3, CATSPER1 and CATSPER2 respectively. TMEM262/CATSPERH interacts with CATSPERB, further stabilizing the complex. C2CD6/CATSPERT interacts at least with CATSPERD and is required for targeting the CatSper complex in the flagellar membrane. Interacts with EFCAB9; the interaction is direct, Ca(2+)-dependent and connects EFCAB9 with the CatSper complex. Dissociates from EFCAB9 at elevated pH.

Its subcellular location is the cell projection. The protein resides in the cilium. The protein localises to the flagellum membrane. Functionally, auxiliary component of the CatSper complex, a complex involved in sperm cell hyperactivation. Sperm cell hyperactivation is needed for sperm motility which is essential late in the preparation of sperm for fertilization. Required for a distribution of the CatSper complex in linear quadrilateral nanodomains along the flagellum, maximizing fertilization inside the mammalian female reproductive tract. Together with EFCAB9, associates with the CatSper channel pore and is required for the two-row structure of each single CatSper channel. The sequence is that of Cation channel sperm-associated auxiliary subunit zeta from Homo sapiens (Human).